Reading from the N-terminus, the 594-residue chain is Probable pectinesterase/pectinesterase inhibitor 33 (594 aa).

An N-terminal signal peptide occupies residues 1–22 (MLRGIFHICLLASFLLLPFSSA). A disordered region spans residues 28-75 (FTGGTDAPPPWDHNVSPPPETAPSPTPTSSPSTTSPPSPGPVAAPSPI). Pro residues predominate over residues 34-71 (APPPWDHNVSPPPETAPSPTPTSSPSTTSPPSPGPVAA). Residues Asn-77, Asn-170, Asn-213, and Asn-226 are each glycosylated (N-linked (GlcNAc...) asparagine). Residues 78–237 (GSVSGDMTWW…SDLIGNCLAV (160 aa)) form a pectinesterase inhibitor 33 region. Residues 280–581 (HLVVAQDRSG…TVGSLIAGGS (302 aa)) are pectinesterase 33. Residues Thr-356 and Gln-386 each contribute to the substrate site. Asp-409 acts as the Proton donor; for pectinesterase activity in catalysis. A disulfide bridge links Cys-423 with Cys-443. The active-site Nucleophile; for pectinesterase activity is the Asp-430. Positions 498 and 500 each coordinate substrate.

In the N-terminal section; belongs to the PMEI family. The protein in the C-terminal section; belongs to the pectinesterase family. Expressed in siliques.

It localises to the secreted. The protein resides in the cell wall. The catalysed reaction is [(1-&gt;4)-alpha-D-galacturonosyl methyl ester](n) + n H2O = [(1-&gt;4)-alpha-D-galacturonosyl](n) + n methanol + n H(+). It participates in glycan metabolism; pectin degradation; 2-dehydro-3-deoxy-D-gluconate from pectin: step 1/5. Acts in the modification of cell walls via demethylesterification of cell wall pectin. This chain is Probable pectinesterase/pectinesterase inhibitor 33 (PME33), found in Arabidopsis thaliana (Mouse-ear cress).